A 429-amino-acid polypeptide reads, in one-letter code: GTPase Obg (429 aa).

The 158-residue stretch at 1-158 folds into the Obg domain; it reads MFYDTAKIYV…RWLLLELKLL (158 aa). The OBG-type G domain occupies 159–329; the sequence is ADVGLVGYPN…LIYRLWEIIS (171 aa). Residues 165–172, 190–194, 212–215, 282–285, and 310–312 each bind GTP; these read GYPNAGKS, FTTLT, DIPG, NKMD, and SAL. The Mg(2+) site is built by serine 172 and threonine 192. The OCT domain occupies 344–421; that stretch reads IKEQPEEGFV…IGKFEFYFVD (78 aa).

The protein belongs to the TRAFAC class OBG-HflX-like GTPase superfamily. OBG GTPase family. As to quaternary structure, monomer. Mg(2+) is required as a cofactor.

The protein localises to the cytoplasm. Its function is as follows. An essential GTPase which binds GTP, GDP and possibly (p)ppGpp with moderate affinity, with high nucleotide exchange rates and a fairly low GTP hydrolysis rate. Plays a role in control of the cell cycle, stress response, ribosome biogenesis and in those bacteria that undergo differentiation, in morphogenesis control. This chain is GTPase Obg, found in Carboxydothermus hydrogenoformans (strain ATCC BAA-161 / DSM 6008 / Z-2901).